A 122-amino-acid polypeptide reads, in one-letter code: Large ribosomal subunit protein uL14 (122 aa).

This sequence belongs to the universal ribosomal protein uL14 family. In terms of assembly, part of the 50S ribosomal subunit. Forms a cluster with proteins L3 and L19. In the 70S ribosome, L14 and L19 interact and together make contacts with the 16S rRNA in bridges B5 and B8.

Its function is as follows. Binds to 23S rRNA. Forms part of two intersubunit bridges in the 70S ribosome. This chain is Large ribosomal subunit protein uL14, found in Acinetobacter baylyi (strain ATCC 33305 / BD413 / ADP1).